Reading from the N-terminus, the 139-residue chain is FNPCPYSDDTVKMIILTEQNKKQDFYTLDTIGEHNQFNKLTAKSQVVFIVWQTGIGDAITARAASGLAMLVDKYQMAPVASDIKLCNAGCYCRPTAIQFAWEHKCVGIRCSDPGVPTDGLSGRPHYGETLHKVRSYNGK.

Expressed by the venom gland.

The protein localises to the secreted. The catalysed reaction is a 1,2-diacyl-sn-glycero-3-phosphocholine + H2O = a 1-acyl-sn-glycero-3-phosphocholine + a fatty acid + H(+). Functionally, has a highly toxic phospholipase A2 activity. This is Orientotoxin-2 from Vespa orientalis (Oriental hornet).